Consider the following 205-residue polypeptide: Bacterial microcompartment protein trimer-1 (205 aa).

The disordered stretch occupies residues Met-1 to Pro-20. BMC domains follow at residues Ala-21 to Asp-106 and Ser-120 to Phe-204.

The protein belongs to the bacterial microcompartments protein family. Homotrimerizes to form a pseudohexamer. Unlike its paralogs BMC-T2 and BMC-T3, the pseudohexamers do not stack. The concave side faces outward, with the N- and C-terminii exposed to the cytoplasm.

The protein localises to the bacterial microcompartment. In terms of biological role, a minor component of the bacterial microcompartment (BMC) shell. Expression of 5 proteins in E.coli (BMC-H (Hoch_5815), BMC-P (Hoch_5814), and 3 BMC-T (Hoch_5812, Hoch_5816, Hoch_3341)) forms 40 nm artificial BMCs with a molecular mass of 6.5 MDa. This protein does not form stacked pseudohexamers in the BMC. There are 20 BMC-T pseudohexamers per BMC, composed of mixed BMC-T1, BMC-T2 and BMC-T3. The shell facets are 20-30 Angstroms thick, with 1 of BMC-T trimers protruding to the exterior. This chain is Bacterial microcompartment protein trimer-1, found in Haliangium ochraceum (strain DSM 14365 / JCM 11303 / SMP-2).